Here is a 110-residue protein sequence, read N- to C-terminus: UPF0060 membrane protein Bcep1808_1236 (110 aa).

A run of 3 helical transmembrane segments spans residues 9-29 (ALFAVTAVAEIVGCYLPWLVL), 34-54 (PVWLLVPAALSLALFAWLLTL), and 66-86 (YGGVYIGVALLWLRVVDGVAL).

It belongs to the UPF0060 family.

Its subcellular location is the cell inner membrane. In Burkholderia vietnamiensis (strain G4 / LMG 22486) (Burkholderia cepacia (strain R1808)), this protein is UPF0060 membrane protein Bcep1808_1236.